A 475-amino-acid polypeptide reads, in one-letter code: Citrate synthase, mitochondrial (475 aa).

Residues histidine 310, histidine 356, and aspartate 411 contribute to the active site.

The protein belongs to the citrate synthase family.

The protein resides in the mitochondrion matrix. It carries out the reaction oxaloacetate + acetyl-CoA + H2O = citrate + CoA + H(+). It functions in the pathway carbohydrate metabolism; tricarboxylic acid cycle; isocitrate from oxaloacetate: step 1/2. The chain is Citrate synthase, mitochondrial (cit-1) from Aspergillus niger.